Consider the following 178-residue polypeptide: ATP synthase subunit b (178 aa).

Residues 30 to 50 traverse the membrane as a helical segment; it reads FFFVLAIFLIVLAVIGTFVVP.

This sequence belongs to the ATPase B chain family. In terms of assembly, F-type ATPases have 2 components, F(1) - the catalytic core - and F(0) - the membrane proton channel. F(1) has five subunits: alpha(3), beta(3), gamma(1), delta(1), epsilon(1). F(0) has three main subunits: a(1), b(2) and c(10-14). The alpha and beta chains form an alternating ring which encloses part of the gamma chain. F(1) is attached to F(0) by a central stalk formed by the gamma and epsilon chains, while a peripheral stalk is formed by the delta and b chains.

It localises to the cell membrane. F(1)F(0) ATP synthase produces ATP from ADP in the presence of a proton or sodium gradient. F-type ATPases consist of two structural domains, F(1) containing the extramembraneous catalytic core and F(0) containing the membrane proton channel, linked together by a central stalk and a peripheral stalk. During catalysis, ATP synthesis in the catalytic domain of F(1) is coupled via a rotary mechanism of the central stalk subunits to proton translocation. Its function is as follows. Component of the F(0) channel, it forms part of the peripheral stalk, linking F(1) to F(0). In Mycobacterium avium (strain 104), this protein is ATP synthase subunit b.